Reading from the N-terminus, the 429-residue chain is Saccharopine dehydrogenase-like oxidoreductase (429 aa).

Position 2 is an N-acetylalanine (Ala2). Residue Ser217 is modified to Phosphoserine.

The protein belongs to the saccharopine dehydrogenase family.

This is Saccharopine dehydrogenase-like oxidoreductase (SCCPDH) from Homo sapiens (Human).